Consider the following 319-residue polypeptide: Cell surface A33 antigen (319 aa).

Positions 1-21 (MLGKAGSVVWMLCAIWVAADA) are cleaved as a signal peptide. The 113-residue stretch at 22–134 (LTVETTQDIL…QDVNAKSRVR (113 aa)) folds into the Ig-like V-type domain. Residues 22–235 (LTVETTQDIL…VAPRPPSMNI (214 aa)) are Extracellular-facing. 3 disulfide bridges follow: C43-C117, C146-C222, and C162-C211. N-linked (GlcNAc...) asparagine glycans are attached at residues N99, N112, N200, and N223. An Ig-like C2-type domain is found at 140–227 (PPSKPDCSIQ…GIESCNITVA (88 aa)). The chain crosses the membrane as a helical span at residues 236–256 (ALYAGIAGGVFVALIIIGVIV). Residues 257–319 (YCCCCREKDD…GRSTPDQPFQ (63 aa)) lie on the Cytoplasmic side of the membrane. Composition is skewed to basic and acidic residues over residues 267-276 (KDQDREDARP) and 284-308 (PKKEQKEISRGREDEDDHRHEDRWS). A disordered region spans residues 267-319 (KDQDREDARPNRAAYQVPKKEQKEISRGREDEDDHRHEDRWSSGRSTPDQPFQ). Residues 309–319 (SGRSTPDQPFQ) show a composition bias toward polar residues.

Palmitoylated.

Its subcellular location is the membrane. In terms of biological role, may play a role in cell-cell recognition and signaling. The chain is Cell surface A33 antigen (Gpa33) from Mus musculus (Mouse).